We begin with the raw amino-acid sequence, 234 residues long: Probable septum site-determining protein MinC (234 aa).

It belongs to the MinC family. As to quaternary structure, interacts with MinD and FtsZ.

Cell division inhibitor that blocks the formation of polar Z ring septums. Rapidly oscillates between the poles of the cell to destabilize FtsZ filaments that have formed before they mature into polar Z rings. Prevents FtsZ polymerization. This Pseudoalteromonas translucida (strain TAC 125) protein is Probable septum site-determining protein MinC.